The sequence spans 135 residues: Ribonuclease P protein component 2 (135 aa).

It belongs to the eukaryotic/archaeal RNase P protein component 2 family. As to quaternary structure, consists of a catalytic RNA component and at least 4-5 protein subunits.

The protein resides in the cytoplasm. The enzyme catalyses Endonucleolytic cleavage of RNA, removing 5'-extranucleotides from tRNA precursor.. In terms of biological role, part of ribonuclease P, a protein complex that generates mature tRNA molecules by cleaving their 5'-ends. In Methanococcus aeolicus (strain ATCC BAA-1280 / DSM 17508 / OCM 812 / Nankai-3), this protein is Ribonuclease P protein component 2.